The sequence spans 592 residues: NADH-quinone oxidoreductase subunit C/D (592 aa).

The tract at residues 1 to 183 (MSAAQSPTAQ…DPYTLTVEGQ (183 aa)) is NADH dehydrogenase I subunit C. The tract at residues 207-592 (DYMFLNLGPN…IDFVMADVDR (386 aa)) is NADH dehydrogenase I subunit D.

The protein in the N-terminal section; belongs to the complex I 30 kDa subunit family. It in the C-terminal section; belongs to the complex I 49 kDa subunit family. As to quaternary structure, NDH-1 is composed of 13 different subunits. Subunits NuoB, CD, E, F, and G constitute the peripheral sector of the complex.

Its subcellular location is the cell inner membrane. It carries out the reaction a quinone + NADH + 5 H(+)(in) = a quinol + NAD(+) + 4 H(+)(out). In terms of biological role, NDH-1 shuttles electrons from NADH, via FMN and iron-sulfur (Fe-S) centers, to quinones in the respiratory chain. The immediate electron acceptor for the enzyme in this species is believed to be ubiquinone. Couples the redox reaction to proton translocation (for every two electrons transferred, four hydrogen ions are translocated across the cytoplasmic membrane), and thus conserves the redox energy in a proton gradient. The chain is NADH-quinone oxidoreductase subunit C/D from Chromohalobacter salexigens (strain ATCC BAA-138 / DSM 3043 / CIP 106854 / NCIMB 13768 / 1H11).